The following is a 234-amino-acid chain: Ribosomal RNA large subunit methyltransferase E (234 aa).

The disordered stretch occupies residues 1–37 (MSDDDRRRWKGPGPERQDSGRRSTERKVIARNARTES). 5 residues coordinate S-adenosyl-L-methionine: glycine 91, tryptophan 93, aspartate 109, aspartate 125, and aspartate 149. Lysine 189 functions as the Proton acceptor in the catalytic mechanism.

It belongs to the class I-like SAM-binding methyltransferase superfamily. RNA methyltransferase RlmE family.

The protein resides in the cytoplasm. It carries out the reaction uridine(2552) in 23S rRNA + S-adenosyl-L-methionine = 2'-O-methyluridine(2552) in 23S rRNA + S-adenosyl-L-homocysteine + H(+). Specifically methylates the uridine in position 2552 of 23S rRNA at the 2'-O position of the ribose in the fully assembled 50S ribosomal subunit. The protein is Ribosomal RNA large subunit methyltransferase E of Hyphomonas neptunium (strain ATCC 15444).